We begin with the raw amino-acid sequence, 909 residues long: Translation initiation factor IF-2 (909 aa).

The interval 49-314 (LNREQGGSAG…GKQRKTSTLQ (266 aa)) is disordered. Composition is skewed to basic and acidic residues over residues 99–177 (DAVE…EHKQ), 186–236 (IQSE…KWSS), and 255–270 (RAAEDENDAKVEGDRR). The segment covering 271–285 (ARGRSGKATRQKKNN) has biased composition (basic residues). Positions 286-299 (KHSESKADREEARA) are enriched in basic and acidic residues. In terms of domain architecture, tr-type G spans 408–577 (PRAPVVTIMG…LLQAEVLELK (170 aa)). Positions 417–424 (GHVDHGKT) are G1. Position 417–424 (417–424 (GHVDHGKT)) interacts with GTP. The interval 442 to 446 (GITQH) is G2. The tract at residues 463–466 (DTPG) is G3. Residues 463–467 (DTPGH) and 517–520 (NKID) each bind GTP. Residues 517 to 520 (NKID) are G4. The interval 553–555 (SAK) is G5.

This sequence belongs to the TRAFAC class translation factor GTPase superfamily. Classic translation factor GTPase family. IF-2 subfamily.

The protein localises to the cytoplasm. In terms of biological role, one of the essential components for the initiation of protein synthesis. Protects formylmethionyl-tRNA from spontaneous hydrolysis and promotes its binding to the 30S ribosomal subunits. Also involved in the hydrolysis of GTP during the formation of the 70S ribosomal complex. This chain is Translation initiation factor IF-2, found in Photorhabdus laumondii subsp. laumondii (strain DSM 15139 / CIP 105565 / TT01) (Photorhabdus luminescens subsp. laumondii).